A 154-amino-acid chain; its full sequence is Large ribosomal subunit protein uL13 (154 aa).

Belongs to the universal ribosomal protein uL13 family. Part of the 50S ribosomal subunit.

In terms of biological role, this protein is one of the early assembly proteins of the 50S ribosomal subunit, although it is not seen to bind rRNA by itself. It is important during the early stages of 50S assembly. The sequence is that of Large ribosomal subunit protein uL13 from Rhodopseudomonas palustris (strain BisB5).